The sequence spans 229 residues: Aquaporin Z (229 aa).

The next 2 membrane-spanning stretches (helical) occupy residues 8–28 (FFGT…AAGV) and 33–53 (IGYL…AYAI). An NPA 1 motif is present at residues 62–64 (NPA). Helical transmembrane passes span 81–101 (LPYV…LYLI), 131–151 (AALV…LGAT), and 158–178 (GFAP…SIPV). Residues 184 to 186 (NPA) carry the NPA 2 motif. The chain crosses the membrane as a helical span at residues 199–219 (AVSQLWLFWVAPILGAVLGAL).

Belongs to the MIP/aquaporin (TC 1.A.8) family. In terms of assembly, homotetramer.

It localises to the cell inner membrane. It carries out the reaction H2O(in) = H2O(out). Its function is as follows. Channel that permits osmotically driven movement of water in both directions. It is involved in the osmoregulation and in the maintenance of cell turgor during volume expansion in rapidly growing cells. It mediates rapid entry or exit of water in response to abrupt changes in osmolarity. This Pseudomonas aeruginosa (strain ATCC 15692 / DSM 22644 / CIP 104116 / JCM 14847 / LMG 12228 / 1C / PRS 101 / PAO1) protein is Aquaporin Z.